A 344-amino-acid chain; its full sequence is Glyceraldehyde-3-phosphate dehydrogenase (344 aa).

NAD(+) contacts are provided by residues 11–12 and G110; that span reads TI. 139 to 141 serves as a coordination point for D-glyceraldehyde 3-phosphate; it reads SCN. Residue C140 is the Nucleophile of the active site. R169 lines the NAD(+) pocket. 195 to 196 lines the D-glyceraldehyde 3-phosphate pocket; it reads HG. Residue Q302 coordinates NAD(+).

The protein belongs to the glyceraldehyde-3-phosphate dehydrogenase family. Homotetramer.

It is found in the cytoplasm. It carries out the reaction D-glyceraldehyde 3-phosphate + phosphate + NADP(+) = (2R)-3-phospho-glyceroyl phosphate + NADPH + H(+). The enzyme catalyses D-glyceraldehyde 3-phosphate + phosphate + NAD(+) = (2R)-3-phospho-glyceroyl phosphate + NADH + H(+). It functions in the pathway carbohydrate degradation; glycolysis; pyruvate from D-glyceraldehyde 3-phosphate: step 1/5. The sequence is that of Glyceraldehyde-3-phosphate dehydrogenase from Pyrobaculum calidifontis (strain DSM 21063 / JCM 11548 / VA1).